We begin with the raw amino-acid sequence, 757 residues long: RNA-directed RNA polymerase catalytic subunit (757 aa).

Residues 50–82 (SEKGKWTTNTETGAPQLNPIDGPLPEDNEPSGY) are disordered. A compositionally biased stretch (polar residues) spans 55–64 (WTTNTETGAP). Short sequence motifs (nuclear localization signal) lie at residues 187–195 (RKRRVRDNM) and 203–216 (RTIG…NKRS). The interval 249–256 (RGFVYFVE) is promoter-binding site. One can recognise a RdRp catalytic domain in the interval 286–483 (VRKMMTNSQD…GINMSKKKSY (198 aa)).

This sequence belongs to the influenza viruses polymerase PB1 family. As to quaternary structure, influenza RNA polymerase is composed of three subunits: PB1, PB2 and PA. Interacts (via N-terminus) with PA (via C-terminus). Interacts (via C-terminus) with PB2 (via N-terminus); this interaction is essential for transcription initiation. In terms of processing, phosphorylated by host PRKCA.

The protein localises to the host nucleus. Its subcellular location is the host cytoplasm. The catalysed reaction is RNA(n) + a ribonucleoside 5'-triphosphate = RNA(n+1) + diphosphate. In terms of biological role, RNA-dependent RNA polymerase which is responsible for replication and transcription of virus RNA segments. The transcription of viral mRNAs occurs by a unique mechanism called cap-snatching. 5' methylated caps of cellular mRNAs are cleaved after 10-13 nucleotides by PA. In turn, these short capped RNAs are used as primers by PB1 for transcription of viral mRNAs. During virus replication, PB1 initiates RNA synthesis and copy vRNA into complementary RNA (cRNA) which in turn serves as a template for the production of more vRNAs. This Influenza A virus (strain A/Turkey/Minnesota/501/1978 H6N8) protein is RNA-directed RNA polymerase catalytic subunit.